A 284-amino-acid polypeptide reads, in one-letter code: D-tagatose-1,6-bisphosphate aldolase subunit GatY (284 aa).

The active-site Proton donor is aspartate 82. Zn(2+) contacts are provided by histidine 83 and histidine 180. Residue glycine 181 coordinates dihydroxyacetone phosphate. Histidine 208 provides a ligand contact to Zn(2+). Residues 209 to 211 (GAS) and 230 to 233 (NVAT) contribute to the dihydroxyacetone phosphate site.

It belongs to the class II fructose-bisphosphate aldolase family. TagBP aldolase GatY subfamily. Forms a complex with GatZ. Zn(2+) serves as cofactor.

It carries out the reaction D-tagatofuranose 1,6-bisphosphate = D-glyceraldehyde 3-phosphate + dihydroxyacetone phosphate. It participates in carbohydrate metabolism; D-tagatose 6-phosphate degradation; D-glyceraldehyde 3-phosphate and glycerone phosphate from D-tagatose 6-phosphate: step 2/2. Functionally, catalytic subunit of the tagatose-1,6-bisphosphate aldolase GatYZ, which catalyzes the reversible aldol condensation of dihydroxyacetone phosphate (DHAP or glycerone-phosphate) with glyceraldehyde 3-phosphate (G3P) to produce tagatose 1,6-bisphosphate (TBP). Requires GatZ subunit for full activity and stability. Is involved in the catabolism of galactitol. The polypeptide is D-tagatose-1,6-bisphosphate aldolase subunit GatY (Escherichia coli O8 (strain IAI1)).